A 621-amino-acid chain; its full sequence is Frizzled and smoothened-like protein H (621 aa).

The first 21 residues, 1–21, serve as a signal peptide directing secretion; sequence MNLKFYNLIFFISFLICCIHG. Residues 22–246 are Extracellular-facing; sequence QRYLPVEGGK…VWNQIFKIND (225 aa). In terms of domain architecture, FZ spans 27–166; it reads VEGGKCEKYI…IEWVKYNLTI (140 aa). 2 cysteine pairs are disulfide-bonded: cysteine 32-cysteine 103 and cysteine 46-cysteine 96. Residues asparagine 60, asparagine 107, asparagine 163, asparagine 176, and asparagine 206 are each glycosylated (N-linked (GlcNAc...) asparagine). A helical transmembrane segment spans residues 247 to 267; sequence VLSSISLACTLILLFTFGILN. Residues 268-277 lie on the Cytoplasmic side of the membrane; that stretch reads PKLNRFDKKN. The chain crosses the membrane as a helical span at residues 278-298; the sequence is LFFIAGVFGMSVSGVLIAANG. Residues 299–318 lie on the Extracellular side of the membrane; that stretch reads SEKTVCPTPERYAVNTDRVC. A helical membrane pass occupies residues 319–339; sequence VASGFLVHFSALFAILWWTIG. Residues 340–359 lie on the Cytoplasmic side of the membrane; the sequence is LADVYYGIKFVGKKIKIKVR. Residues 360–380 traverse the membrane as a helical segment; sequence YYLLATLTISLAFTLVPLGTG. At 381–400 the chain is on the extracellular side; it reads QYQAGLSNVMCFLKDEIYQS. A helical transmembrane segment spans residues 401–421; the sequence is MTFFVPLGICLTMGTILMILV. At 422–464 the chain is on the cytoplasmic side; that stretch reads MREIYVIVKSNSTSSSFSSSSSKSKSKSKSSDSISYLKLQVKP. Residues 465–485 form a helical membrane-spanning segment; the sequence is MLNIILFYFTFLYLFLFVRVI. Residues 486-520 lie on the Extracellular side of the membrane; the sequence is NSRYQEYEDSAIPYMLCLAKGGGDSCRLKGPSAGS. A helical membrane pass occupies residues 521–541; that stretch reads LGYFAYCLRIYGIYLFIISFL. The Cytoplasmic portion of the chain corresponds to 542 to 621; the sequence is SSRTIKIWKE…RNYNTDDDDL (80 aa). Residues 575–594 show a composition bias toward low complexity; sequence FSSSKNTSTTQNSTLNNTES. Positions 575 to 603 are disordered; the sequence is FSSSKNTSTTQNSTLNNTESDTSKRGNSS.

The protein belongs to the G-protein coupled receptor Fz/Smo family.

Its subcellular location is the membrane. This is Frizzled and smoothened-like protein H (fslH) from Dictyostelium discoideum (Social amoeba).